A 438-amino-acid polypeptide reads, in one-letter code: 3-phosphoshikimate 1-carboxyvinyltransferase (438 aa).

K21 is a binding site for phosphoenolpyruvate. The 3-phosphoshikimate site is built by S22 and R26. Residues N93–T96 form a phosphoenolpyruvate region. Phosphoenolpyruvate contacts are provided by G95, T96, and R123. Positions 167, 168, 169, 315, and 342 each coordinate 3-phosphoshikimate. Q169 contributes to the phosphoenolpyruvate binding site. D315 serves as the catalytic Proton acceptor. Residues R346 and R387 each coordinate phosphoenolpyruvate.

It belongs to the EPSP synthase family. Homodimer or homotetramer.

Its subcellular location is the cytoplasm. It carries out the reaction 3-phosphoshikimate + phosphoenolpyruvate = 5-O-(1-carboxyvinyl)-3-phosphoshikimate + phosphate. It functions in the pathway metabolic intermediate biosynthesis; chorismate biosynthesis; chorismate from D-erythrose 4-phosphate and phosphoenolpyruvate: step 6/7. Its function is as follows. Catalyzes the transfer of the enolpyruvyl moiety of phosphoenolpyruvate (PEP) to the 5-hydroxyl of shikimate-3-phosphate (S3P) to produce enolpyruvyl shikimate-3-phosphate and inorganic phosphate. In Coxiella burnetii (strain RSA 493 / Nine Mile phase I), this protein is 3-phosphoshikimate 1-carboxyvinyltransferase.